Consider the following 396-residue polypeptide: MQSLVILGATGSIGASTLNVVKCNHEQYRVFALVANTNVAKMLEICIEHRPLVAHMVNAQAATELKRLLPSELAIEVTTGEDELLSLVSCAEVDTVMAAIVGAAGLPSTLAAVKAGKRVLLANKESLVMSGQLFIEAMQSSGATVLPVDSEHNAIFQCLSERTQLEIGRCDLAGAGISHILLTGSGGPFLNSELSTLSSMTPAQACKHPNWSMGQKISVDSASMMNKGLEYIEARWLFNASAEQLKVVIHPQSVIHSMVQYRDGSVIAQLGNPDMRTPIAHCMSFPQRISSGVEPLDFFKVGQLSFLEPDFNRFPCLALAIEACKQGQEATTVLNAANEISVQAFLEGQIRFTDIAIINEQSFKHVTAQSLTTIDDIMALDSQARQYALEAVNKLK.

NADPH contacts are provided by T10, G11, S12, I13, N38, and N123. K124 lines the 1-deoxy-D-xylulose 5-phosphate pocket. Residue E125 participates in NADPH binding. Mn(2+) is bound at residue D149. 1-deoxy-D-xylulose 5-phosphate is bound by residues S150, E151, S185, and H208. E151 is a Mn(2+) binding site. Residue G214 coordinates NADPH. The 1-deoxy-D-xylulose 5-phosphate site is built by S221, N226, K227, and E230. E230 contributes to the Mn(2+) binding site.

This sequence belongs to the DXR family. It depends on Mg(2+) as a cofactor. Requires Mn(2+) as cofactor.

It carries out the reaction 2-C-methyl-D-erythritol 4-phosphate + NADP(+) = 1-deoxy-D-xylulose 5-phosphate + NADPH + H(+). It participates in isoprenoid biosynthesis; isopentenyl diphosphate biosynthesis via DXP pathway; isopentenyl diphosphate from 1-deoxy-D-xylulose 5-phosphate: step 1/6. In terms of biological role, catalyzes the NADPH-dependent rearrangement and reduction of 1-deoxy-D-xylulose-5-phosphate (DXP) to 2-C-methyl-D-erythritol 4-phosphate (MEP). This chain is 1-deoxy-D-xylulose 5-phosphate reductoisomerase, found in Shewanella piezotolerans (strain WP3 / JCM 13877).